A 37-amino-acid polypeptide reads, in one-letter code: Photosystem II reaction center protein M (37 aa).

The helical transmembrane segment at Gly7–Val27 threads the bilayer.

It belongs to the PsbM family. As to quaternary structure, PSII is composed of 1 copy each of membrane proteins PsbA, PsbB, PsbC, PsbD, PsbE, PsbF, PsbH, PsbI, PsbJ, PsbK, PsbL, PsbM, PsbT, PsbX, PsbY, PsbZ, Psb30/Ycf12, at least 3 peripheral proteins of the oxygen-evolving complex and a large number of cofactors. It forms dimeric complexes.

It is found in the plastid. The protein localises to the chloroplast thylakoid membrane. Its function is as follows. One of the components of the core complex of photosystem II (PSII). PSII is a light-driven water:plastoquinone oxidoreductase that uses light energy to abstract electrons from H(2)O, generating O(2) and a proton gradient subsequently used for ATP formation. It consists of a core antenna complex that captures photons, and an electron transfer chain that converts photonic excitation into a charge separation. This subunit is found at the monomer-monomer interface. The chain is Photosystem II reaction center protein M from Pinus koraiensis (Korean pine).